Consider the following 99-residue polypeptide: MAPTLLTEEQRKELIPKDWEMVVGRDAIKKTFTFKDFNQAFSFMTRVALVAEQMNHHPEWFNVYNRVEITLATHDCSGLSVNDTKMADIMNQFFNQLHQ.

This sequence belongs to the pterin-4-alpha-carbinolamine dehydratase family.

It catalyses the reaction (4aS,6R)-4a-hydroxy-L-erythro-5,6,7,8-tetrahydrobiopterin = (6R)-L-erythro-6,7-dihydrobiopterin + H2O. In terms of biological role, involved in tetrahydrobiopterin biosynthesis. The protein is Pterin-4-alpha-carbinolamine dehydratase (pcbd) of Dictyostelium discoideum (Social amoeba).